Reading from the N-terminus, the 493-residue chain is Putative MgpC-like protein MPN_414 (493 aa).

Residues 1–14 (MKPTSLPKNFTNNP) are compositionally biased toward polar residues. Disordered regions lie at residues 1 to 92 (MKPT…GHNS) and 441 to 493 (KSAR…SGNH). 2 stretches are compositionally biased toward basic and acidic residues: residues 25–34 (DNGRAYRKLN) and 44–56 (DSTK…DKDG). Composition is skewed to polar residues over residues 72 to 92 (VSST…GHNS) and 445 to 472 (ENAQ…SPCR). The segment covering 482–493 (RVTEEERSSGNH) has biased composition (basic and acidic residues).

This sequence belongs to the MgpC family.

The chain is Putative MgpC-like protein MPN_414 from Mycoplasma pneumoniae (strain ATCC 29342 / M129 / Subtype 1) (Mycoplasmoides pneumoniae).